The chain runs to 122 residues: Ribosomal protein eL22-like (122 aa).

Residues Ser112, Ser118, and Ser120 each carry the phosphoserine modification.

The protein belongs to the eukaryotic ribosomal protein eL22 family.

The chain is Ribosomal protein eL22-like (RPL22L1) from Homo sapiens (Human).